Here is a 927-residue protein sequence, read N- to C-terminus: Translation initiation factor IF-2 (927 aa).

Residues 27-337 are disordered; sequence LGLPVKSHAS…GAPKPVTERK (311 aa). Over residues 49–69 the composition is skewed to polar residues; that stretch reads SFSSSKTKAPTNSVQTNQGVK. 2 stretches are compositionally biased toward basic and acidic residues: residues 70–86 and 101–138; these read TESK…DDKP and FKAE…DRRH. Over residues 146–159 the composition is skewed to low complexity; that stretch reads GNRNDNRQGQQNNR. Basic and acidic residues-rich tracts occupy residues 160 to 171, 202 to 226, and 234 to 257; these read NKNDGRYADHKQ, YSRH…EQEL, and AQEE…KEIV. Positions 300–316 are enriched in low complexity; the sequence is NWNNQNQVRNQRNSNWN. Residues 428–597 enclose the tr-type G domain; the sequence is ERPPVVTIMG…LLVAEMEELK (170 aa). Residues 437–444 are G1; it reads GHVDHGKT. 437 to 444 is a binding site for GTP; that stretch reads GHVDHGKT. Positions 462–466 are G2; sequence GITQH. The interval 483–486 is G3; it reads DTPG. GTP is bound by residues 483-487 and 537-540; these read DTPGH and NKID. The segment at 537–540 is G4; sequence NKID. A G5 region spans residues 573 to 575; the sequence is SAK.

Belongs to the TRAFAC class translation factor GTPase superfamily. Classic translation factor GTPase family. IF-2 subfamily.

It is found in the cytoplasm. Functionally, one of the essential components for the initiation of protein synthesis. Protects formylmethionyl-tRNA from spontaneous hydrolysis and promotes its binding to the 30S ribosomal subunits. Also involved in the hydrolysis of GTP during the formation of the 70S ribosomal complex. In Streptococcus agalactiae serotype V (strain ATCC BAA-611 / 2603 V/R), this protein is Translation initiation factor IF-2.